Here is a 377-residue protein sequence, read N- to C-terminus: Chaperone protein DnaJ (377 aa).

Positions 5–69 constitute a J domain; that stretch reads EFYDRLGVSK…QKRSAYDQYG (65 aa). A CR-type zinc finger spans residues 133–215; sequence GVEKDVSYHR…CHGTGHEKET (83 aa). Zn(2+)-binding residues include cysteine 146, cysteine 149, cysteine 163, cysteine 166, cysteine 189, cysteine 192, cysteine 203, and cysteine 206. CXXCXGXG motif repeat units lie at residues 146–153, 163–170, 189–196, and 203–210; these read CHTCAGSG, CGRCHGSG, CDVCHGSG, and CQTCHGTG.

It belongs to the DnaJ family. Homodimer. Zn(2+) is required as a cofactor.

Its subcellular location is the cytoplasm. In terms of biological role, participates actively in the response to hyperosmotic and heat shock by preventing the aggregation of stress-denatured proteins and by disaggregating proteins, also in an autonomous, DnaK-independent fashion. Unfolded proteins bind initially to DnaJ; upon interaction with the DnaJ-bound protein, DnaK hydrolyzes its bound ATP, resulting in the formation of a stable complex. GrpE releases ADP from DnaK; ATP binding to DnaK triggers the release of the substrate protein, thus completing the reaction cycle. Several rounds of ATP-dependent interactions between DnaJ, DnaK and GrpE are required for fully efficient folding. Also involved, together with DnaK and GrpE, in the DNA replication of plasmids through activation of initiation proteins. The protein is Chaperone protein DnaJ of Streptococcus uberis (strain ATCC BAA-854 / 0140J).